The primary structure comprises 216 residues: UPF0134 protein MPN_344 (216 aa).

The span at 47–62 (FTIIEDQQDRPDKPEE) shows a compositional bias: basic and acidic residues. 2 disordered regions span residues 47-104 (FTII…PKPD) and 194-216 (GKMD…LESK). Residues 68-78 (IPKPPKPPKGP) show a composition bias toward pro residues. Positions 83–93 (EPGQPGGPDDP) are enriched in low complexity.

The protein belongs to the UPF0134 family.

The polypeptide is UPF0134 protein MPN_344 (Mycoplasma pneumoniae (strain ATCC 29342 / M129 / Subtype 1) (Mycoplasmoides pneumoniae)).